Here is a 215-residue protein sequence, read N- to C-terminus: UPF0502 protein YceH (215 aa).

Residue Lys80 is modified to N6-acetyllysine.

This sequence belongs to the UPF0502 family.

The protein is UPF0502 protein YceH of Shigella sonnei (strain Ss046).